The chain runs to 63 residues: UPF0370 protein PC1_1167 (63 aa).

Residues 3–23 (WLADYWWIILIILIGMLINGI) form a helical membrane-spanning segment. A disordered region spans residues 37-63 (NKPKLPPHRDNNDKWDDEDDDWPKKKP).

Belongs to the UPF0370 family.

It is found in the cell membrane. This Pectobacterium carotovorum subsp. carotovorum (strain PC1) protein is UPF0370 protein PC1_1167.